Consider the following 208-residue polypeptide: Rac-like GTP-binding protein ARAC8 (208 aa).

Position 15–22 (15–22 (GDGAVGKT)) interacts with GTP. Residues 37–45 (YIPTVFDNF) carry the Effector region motif. GTP is bound by residues 62 to 66 (DTAGQ) and 120 to 123 (TKMD). Residues C199 and C205 are each lipidated (S-palmitoyl cysteine).

The protein belongs to the small GTPase superfamily. Rho family. As to quaternary structure, interacts with ICR1. Binds to SPK1. Although this sequence has a C-terminal -CXXX, it is palmitoylated at Cys-205, rather than prenylated.

It localises to the membrane. Acts as a negative regulator of abscisic acid (ABA) responses. The sequence is that of Rac-like GTP-binding protein ARAC8 (ARAC8) from Arabidopsis thaliana (Mouse-ear cress).